We begin with the raw amino-acid sequence, 910 residues long: p53-induced death domain-containing protein 1 (910 aa).

The interval 1–25 is disordered; sequence MAATVEGPELEAAAAAGDASEDSDA. The residue at position 2 (alanine 2) is an N-acetylalanine. LRR repeat units lie at residues 126–147, 149–171, 172–194, 195–216, 218–240, 241–263, and 264–285; these read HLAH…VLQM, GLGA…GALP, ALTF…GALS, TLQR…IGGL, SLLE…AGLR, SLRL…ARLP, and LLTR…LLDA. Residues serine 299 and serine 305 each carry the phosphoserine modification. 2 consecutive ZU5 domains span residues 322–454 and 455–596; these read DLDS…VSRP and VSNA…WYTT. Peptidase S68 regions lie at residues 423–452 and 566–594; these read DLET…LVVS and DITA…WLWY. Residues histidine 444, serine 446, histidine 586, and serine 588 contribute to the active site. Positions 580 to 716 are UPA domain; it reads ARFQVTHFSW…TTTLDREAQA (137 aa). Residues 788–873 enclose the Death domain; sequence TQSNLLSVAG…DVAEEVRAVL (86 aa). The interval 884-910 is disordered; the sequence is IRRMGLAPKDPALPGSSAPQPPEPAQA.

In terms of assembly, forms a complex named the PIDDosome with CASP2 and CRADD. Forms a complex with IKBKG and RIPK1. Interacts with FADD and MADD. Undergoes autoproteolytic processing whose extent either directs cells towards survival or apoptotic pathways. Autoproteolytically cleaved into two main fragments PIDD-N and PIDD-C. PIDD-C can be further processed into PIDD-CC, a processing which is enhanced by DNA damage. The cleavage producing PIDD-C is required for translocation of PIDD1 to the nucleus upon DNA damage and activation of NF-kappa-B. PIDD-CC mediates the interaction with CRADD and the cleavage producing PIDD-CC is required for the activation of CASP2. PIDD-N remains associated with PIDD-C and PIDD-CC after cleavage. As to expression, ubiquitous.

Its subcellular location is the cytoplasm. The protein localises to the nucleus. Its function is as follows. Component of the DNA damage/stress response pathway that functions downstream of p53/TP53 and can either promote cell survival or apoptosis. Associated with CRADD and the CASP2 caspase, it forms the PIDDosome a complex that activates CASP2 and triggers apoptosis. Associated with IKBKG and RIPK1, it enhances sumoylation and ubiquitination of IKBKG which is important for activation of the transcription factor NF-kappa-B. The sequence is that of p53-induced death domain-containing protein 1 from Homo sapiens (Human).